Here is a 380-residue protein sequence, read N- to C-terminus: Alcohol dehydrogenase 1 (380 aa).

Zn(2+) is bound by residues C48, T50, H70, C100, C103, C106, C114, and C178. The an alcohol site is built by T50 and H70. Residue T50 coordinates NAD(+). NAD(+) is bound by residues G203–G208, D227, R232, T273, V296, V296–V298, and R373.

Belongs to the zinc-containing alcohol dehydrogenase family. In terms of assembly, homodimer. Requires Zn(2+) as cofactor.

It localises to the cytoplasm. It catalyses the reaction a primary alcohol + NAD(+) = an aldehyde + NADH + H(+). The enzyme catalyses a secondary alcohol + NAD(+) = a ketone + NADH + H(+). This chain is Alcohol dehydrogenase 1 (ADH1), found in Trifolium repens (Creeping white clover).